The primary structure comprises 293 residues: Acetylglutamate kinase (293 aa).

Substrate-binding positions include 65 to 66 (GG), arginine 87, and asparagine 188.

This sequence belongs to the acetylglutamate kinase family. ArgB subfamily.

It is found in the cytoplasm. It catalyses the reaction N-acetyl-L-glutamate + ATP = N-acetyl-L-glutamyl 5-phosphate + ADP. Its pathway is amino-acid biosynthesis; L-arginine biosynthesis; N(2)-acetyl-L-ornithine from L-glutamate: step 2/4. In terms of biological role, catalyzes the ATP-dependent phosphorylation of N-acetyl-L-glutamate. The sequence is that of Acetylglutamate kinase from Symbiobacterium thermophilum (strain DSM 24528 / JCM 14929 / IAM 14863 / T).